Reading from the N-terminus, the 346-residue chain is Histidinol-phosphate aminotransferase (346 aa).

Lysine 209 is subject to N6-(pyridoxal phosphate)lysine.

It belongs to the class-II pyridoxal-phosphate-dependent aminotransferase family. Histidinol-phosphate aminotransferase subfamily. Homodimer. The cofactor is pyridoxal 5'-phosphate.

It carries out the reaction L-histidinol phosphate + 2-oxoglutarate = 3-(imidazol-4-yl)-2-oxopropyl phosphate + L-glutamate. It functions in the pathway amino-acid biosynthesis; L-histidine biosynthesis; L-histidine from 5-phospho-alpha-D-ribose 1-diphosphate: step 7/9. The protein is Histidinol-phosphate aminotransferase of Vibrio cholerae serotype O1 (strain ATCC 39541 / Classical Ogawa 395 / O395).